Reading from the N-terminus, the 180-residue chain is Large ribosomal subunit protein uL5 (180 aa).

Belongs to the universal ribosomal protein uL5 family. In terms of assembly, part of the 50S ribosomal subunit; part of the 5S rRNA/L5/L18/L25 subcomplex. Contacts the 5S rRNA and the P site tRNA. Forms a bridge to the 30S subunit in the 70S ribosome.

Functionally, this is one of the proteins that bind and probably mediate the attachment of the 5S RNA into the large ribosomal subunit, where it forms part of the central protuberance. In the 70S ribosome it contacts protein S13 of the 30S subunit (bridge B1b), connecting the 2 subunits; this bridge is implicated in subunit movement. Contacts the P site tRNA; the 5S rRNA and some of its associated proteins might help stabilize positioning of ribosome-bound tRNAs. The chain is Large ribosomal subunit protein uL5 from Lactiplantibacillus plantarum (strain ATCC BAA-793 / NCIMB 8826 / WCFS1) (Lactobacillus plantarum).